The primary structure comprises 216 residues: Pyrophosphatase PpaX (216 aa).

The active-site Nucleophile is aspartate 12.

Belongs to the HAD-like hydrolase superfamily. PpaX family. It depends on Mg(2+) as a cofactor.

The catalysed reaction is diphosphate + H2O = 2 phosphate + H(+). In terms of biological role, hydrolyzes pyrophosphate formed during P-Ser-HPr dephosphorylation by HPrK/P. Might play a role in controlling the intracellular pyrophosphate pool. This Bacillus velezensis (strain DSM 23117 / BGSC 10A6 / LMG 26770 / FZB42) (Bacillus amyloliquefaciens subsp. plantarum) protein is Pyrophosphatase PpaX.